We begin with the raw amino-acid sequence, 390 residues long: Phosphopentomutase (390 aa).

Asp-12, Asp-285, His-290, Asp-326, His-327, and His-338 together coordinate Mn(2+).

This sequence belongs to the phosphopentomutase family. The cofactor is Mn(2+).

The protein resides in the cytoplasm. The enzyme catalyses 2-deoxy-alpha-D-ribose 1-phosphate = 2-deoxy-D-ribose 5-phosphate. It catalyses the reaction alpha-D-ribose 1-phosphate = D-ribose 5-phosphate. It functions in the pathway carbohydrate degradation; 2-deoxy-D-ribose 1-phosphate degradation; D-glyceraldehyde 3-phosphate and acetaldehyde from 2-deoxy-alpha-D-ribose 1-phosphate: step 1/2. Isomerase that catalyzes the conversion of deoxy-ribose 1-phosphate (dRib-1-P) and ribose 1-phosphate (Rib-1-P) to deoxy-ribose 5-phosphate (dRib-5-P) and ribose 5-phosphate (Rib-5-P), respectively. In Brevibacillus brevis (strain 47 / JCM 6285 / NBRC 100599), this protein is Phosphopentomutase.